Here is a 354-residue protein sequence, read N- to C-terminus: Probable L-ascorbate-6-phosphate lactonase UlaG (354 aa).

The protein belongs to the UlaG family. It depends on a divalent metal cation as a cofactor.

It localises to the cytoplasm. It carries out the reaction L-ascorbate 6-phosphate + H2O = 3-dehydro-L-gulonate 6-phosphate. It functions in the pathway cofactor degradation; L-ascorbate degradation; D-xylulose 5-phosphate from L-ascorbate: step 1/4. Functionally, probably catalyzes the hydrolysis of L-ascorbate-6-P into 3-keto-L-gulonate-6-P. Is essential for L-ascorbate utilization under anaerobic conditions. The chain is Probable L-ascorbate-6-phosphate lactonase UlaG from Salmonella gallinarum (strain 287/91 / NCTC 13346).